The sequence spans 236 residues: Small ribosomal subunit protein uS2c (236 aa).

Belongs to the universal ribosomal protein uS2 family.

The protein localises to the plastid. The protein resides in the chloroplast. The protein is Small ribosomal subunit protein uS2c (rps2) of Lolium perenne (Perennial ryegrass).